The primary structure comprises 169 residues: Peptide methionine sulfoxide reductase MsrA (169 aa).

Residue Cys-10 is part of the active site.

The protein belongs to the MsrA Met sulfoxide reductase family.

It catalyses the reaction L-methionyl-[protein] + [thioredoxin]-disulfide + H2O = L-methionyl-(S)-S-oxide-[protein] + [thioredoxin]-dithiol. The enzyme catalyses [thioredoxin]-disulfide + L-methionine + H2O = L-methionine (S)-S-oxide + [thioredoxin]-dithiol. In terms of biological role, has an important function as a repair enzyme for proteins that have been inactivated by oxidation. Catalyzes the reversible oxidation-reduction of methionine sulfoxide in proteins to methionine. The sequence is that of Peptide methionine sulfoxide reductase MsrA from Streptococcus pyogenes serotype M1.